The sequence spans 255 residues: Probable membrane transporter protein HI_0198 (255 aa).

Helical transmembrane passes span 7 to 27 (LLAI…IAGG), 28 to 48 (GGLI…MALG), 76 to 96 (IWFI…LIQS), 99 to 119 (VAIF…YFLF), 132 to 152 (LSYL…DGFF), 153 to 173 (GPGT…FNLP), 191 to 211 (FALF…MMAG), and 235 to 255 (VVIM…WFHF).

Belongs to the 4-toluene sulfonate uptake permease (TSUP) (TC 2.A.102) family.

The protein localises to the cell membrane. This Haemophilus influenzae (strain ATCC 51907 / DSM 11121 / KW20 / Rd) protein is Probable membrane transporter protein HI_0198.